A 416-amino-acid chain; its full sequence is Gamma-glutamyl phosphate reductase (416 aa).

The protein belongs to the gamma-glutamyl phosphate reductase family.

It is found in the cytoplasm. The enzyme catalyses L-glutamate 5-semialdehyde + phosphate + NADP(+) = L-glutamyl 5-phosphate + NADPH + H(+). Its pathway is amino-acid biosynthesis; L-proline biosynthesis; L-glutamate 5-semialdehyde from L-glutamate: step 2/2. In terms of biological role, catalyzes the NADPH-dependent reduction of L-glutamate 5-phosphate into L-glutamate 5-semialdehyde and phosphate. The product spontaneously undergoes cyclization to form 1-pyrroline-5-carboxylate. This is Gamma-glutamyl phosphate reductase from Streptococcus pyogenes serotype M6 (strain ATCC BAA-946 / MGAS10394).